Here is a 443-residue protein sequence, read N- to C-terminus: Oxygen-dependent coproporphyrinogen-III oxidase, mitochondrial (443 aa).

A mitochondrion-targeting transit peptide spans Met-1–Arg-98. Residues Met-90–Glu-111 form a disordered region. The residue at position 101 (Ser-101) is a Phosphoserine. Positions Val-182–Lys-191 are important for dimerization. Ser-233 serves as a coordination point for coproporphyrinogen III. The Proton donor role is filled by His-247. Asn-249 to Arg-251 contributes to the coproporphyrinogen III binding site. Positions Tyr-381–Glu-417 are important for dimerization. N6-acetyllysine; alternate is present on Lys-393. The residue at position 393 (Lys-393) is an N6-succinyllysine; alternate. Gly-400–Arg-402 lines the coproporphyrinogen III pocket.

It belongs to the aerobic coproporphyrinogen-III oxidase family. Homodimer.

It is found in the mitochondrion intermembrane space. The catalysed reaction is coproporphyrinogen III + O2 + 2 H(+) = protoporphyrinogen IX + 2 CO2 + 2 H2O. It participates in porphyrin-containing compound metabolism; protoporphyrin-IX biosynthesis; protoporphyrinogen-IX from coproporphyrinogen-III (O2 route): step 1/1. Its function is as follows. Involved in the heme biosynthesis. Catalyzes the aerobic oxidative decarboxylation of propionate groups of rings A and B of coproporphyrinogen-III to yield the vinyl groups in protoporphyrinogen-IX. This Rattus norvegicus (Rat) protein is Oxygen-dependent coproporphyrinogen-III oxidase, mitochondrial.